The primary structure comprises 105 residues: Multidrug resistance protein EbrA (105 aa).

A run of 4 helical transmembrane segments spans residues L2–L22, A35–I55, L57–V77, and L84–W104.

This sequence belongs to the drug/metabolite transporter (DMT) superfamily. Small multidrug resistance (SMR) (TC 2.A.7.1) family. EbrA/EbrB subfamily. As to quaternary structure, the efflux pump is composed of EbrA and EbrB.

Its subcellular location is the cell membrane. Its function is as follows. Part of a multidrug efflux pump. Confers resistance to cationic lipophilic dyes such as ethidium bromide, acriflavine, pyronine Y and safranin O. The efflux is probably coupled to an influx of protons. The polypeptide is Multidrug resistance protein EbrA (ebrA) (Bacillus subtilis (strain 168)).